A 205-amino-acid polypeptide reads, in one-letter code: Ribonuclease HII (205 aa).

One can recognise an RNase H type-2 domain in the interval 15–205; it reads SQVCGIDEAG…SFKLRKLGEK (191 aa). D21, E22, and D117 together coordinate a divalent metal cation.

This sequence belongs to the RNase HII family. Requires Mn(2+) as cofactor. The cofactor is Mg(2+).

It localises to the cytoplasm. It carries out the reaction Endonucleolytic cleavage to 5'-phosphomonoester.. Endonuclease that specifically degrades the RNA of RNA-DNA hybrids. This is Ribonuclease HII from Chlorobaculum tepidum (strain ATCC 49652 / DSM 12025 / NBRC 103806 / TLS) (Chlorobium tepidum).